A 329-amino-acid chain; its full sequence is DNA-directed RNA polymerase subunit alpha (329 aa).

Residues 1-235 (MQGSVTEFLK…EQLEAFVDLR (235 aa)) are alpha N-terminal domain (alpha-NTD). Positions 249-329 (FDPILLRPVD…DWPPASIADE (81 aa)) are alpha C-terminal domain (alpha-CTD).

Belongs to the RNA polymerase alpha chain family. In terms of assembly, homodimer. The RNAP catalytic core consists of 2 alpha, 1 beta, 1 beta' and 1 omega subunit. When a sigma factor is associated with the core the holoenzyme is formed, which can initiate transcription.

The enzyme catalyses RNA(n) + a ribonucleoside 5'-triphosphate = RNA(n+1) + diphosphate. Functionally, DNA-dependent RNA polymerase catalyzes the transcription of DNA into RNA using the four ribonucleoside triphosphates as substrates. The polypeptide is DNA-directed RNA polymerase subunit alpha (Salmonella choleraesuis (strain SC-B67)).